Here is a 314-residue protein sequence, read N- to C-terminus: DNA-directed RNA polymerase subunit alpha (314 aa).

The alpha N-terminal domain (alpha-NTD) stretch occupies residues 1–228 (MIEIEKPKIE…EHLNIFVGLT (228 aa)). Residues 246 to 314 (EKVLEMTIEE…ELGLGLRKDD (69 aa)) form an alpha C-terminal domain (alpha-CTD) region.

This sequence belongs to the RNA polymerase alpha chain family. Homodimer. The RNAP catalytic core consists of 2 alpha, 1 beta, 1 beta' and 1 omega subunit. When a sigma factor is associated with the core the holoenzyme is formed, which can initiate transcription.

It catalyses the reaction RNA(n) + a ribonucleoside 5'-triphosphate = RNA(n+1) + diphosphate. Its function is as follows. DNA-dependent RNA polymerase catalyzes the transcription of DNA into RNA using the four ribonucleoside triphosphates as substrates. The polypeptide is DNA-directed RNA polymerase subunit alpha (Bacillus velezensis (strain DSM 23117 / BGSC 10A6 / LMG 26770 / FZB42) (Bacillus amyloliquefaciens subsp. plantarum)).